The following is a 625-amino-acid chain: Endoglucanase D (625 aa).

Residues 1 to 17 (SLTGVFPSGLIETKVSA) form the signal peptide. Aspartate 177 functions as the Nucleophile in the catalytic mechanism. Catalysis depends on residues histidine 492 and aspartate 522. The Proton donor role is filled by glutamate 531. In terms of domain architecture, Dockerin spans 555–625 (NEVLYGDVND…LIRVIEKLPI (71 aa)).

The protein belongs to the glycosyl hydrolase 9 (cellulase E) family. The cofactor is Ca(2+).

It catalyses the reaction Endohydrolysis of (1-&gt;4)-beta-D-glucosidic linkages in cellulose, lichenin and cereal beta-D-glucans.. Its function is as follows. This enzyme catalyzes the endohydrolysis of 1,4-beta-glucosidic linkages in cellulose, lichenin and cereal beta-D-glucans. The polypeptide is Endoglucanase D (celD) (Acetivibrio thermocellus (Hungateiclostridium thermocellum)).